A 456-amino-acid polypeptide reads, in one-letter code: L-seryl-tRNA(Sec) selenium transferase (456 aa).

An N6-(pyridoxal phosphate)lysine modification is found at lysine 288.

This sequence belongs to the SelA family. It depends on pyridoxal 5'-phosphate as a cofactor.

It localises to the cytoplasm. It carries out the reaction L-seryl-tRNA(Sec) + selenophosphate + H(+) = L-selenocysteinyl-tRNA(Sec) + phosphate. It participates in aminoacyl-tRNA biosynthesis; selenocysteinyl-tRNA(Sec) biosynthesis; selenocysteinyl-tRNA(Sec) from L-seryl-tRNA(Sec) (bacterial route): step 1/1. Functionally, converts seryl-tRNA(Sec) to selenocysteinyl-tRNA(Sec) required for selenoprotein biosynthesis. This is L-seryl-tRNA(Sec) selenium transferase from Helicobacter hepaticus (strain ATCC 51449 / 3B1).